The sequence spans 930 residues: MTTGFLQKIFGSRNQRLVKQYQKTVAAINALEPQIEKLTDDQLRGKTDEFRQRIAAGESLDKLLPEAFAVCREASRRVLKMRHFDVQLIGGMVLHYGKIAEMRTGEGKTLVATLPVYLNALAGRGVHVVTVNDYLAQRDAEWMARLYNFLGLSVGINLSGMEHDQKQQAYAADITYGTNNEFGFDYLRDNMVYETDARVQRALNFAVVDEVDSILIDEARTPLIISGQAEDHTELYVRMNALPPLLERQIGEEKADGTGVEKPGDYTLDEKSRQVFLTESGHEKAERLLAEWGLIGEGESLYAPQNITLMHHVYAALRAHTLFHKDQHYVVQNGEVVIVDEFTGRLMAGRRWSDGLHQAVEAKEHVKIQSENQTLASITFQNYFRMYAKLAGMTGTADTEAYEFNEIYGLETVVIPTNRPPKRIDKQDQIYKTAKERYDAVIRDIRECYERGQPVLVGTTSIENSELLSHLLTQAGLPHEVLNAKQHEREAAIVAEAGRPKRITIATNMAGRGTDIVLGGNAEKQAAFLEADDSIPPDEKARRIKQLHDEWETLHEQVKAAGGLHIIGTERHESRRIDNQLRGRAGRQGDPGSSRFYLSLDDPLLRIFAGDRVRSIMDRLKMPEGEAIEAGIVTRSIESAQRKVEARNFDIRKQLLEYDDVSNDQRKVIYQQRNELLEAHDITETISAMRHGVITEVVHQFVPAGSIEEQWDVPELEEVLRNDWQLDLAIQEMVNESSSITAEEILEAVTSAADEQYEAKVAMVGRESFSAFERSVMLQTVDRLWREHLAALDHLRQGIHLRGYAQKNPKQEYKREAFELFAAMLDAIKQEVTRIVMNVQVQSPEQLEEAAEQIEEQGGHLENVEFQHADYAESGAPVANVAVAAAATADMVGSAMTHGGAGGEMPKVGRNDPCPCGSGKKYKQCHGKLS.

ATP-binding positions include Gln-87, 105–109, and Asp-515; that span reads GEGKT. The Zn(2+) site is built by Cys-914, Cys-916, Cys-925, and His-926.

The protein belongs to the SecA family. As to quaternary structure, monomer and homodimer. Part of the essential Sec protein translocation apparatus which comprises SecA, SecYEG and auxiliary proteins SecDF-YajC and YidC. Zn(2+) serves as cofactor.

It is found in the cell inner membrane. Its subcellular location is the cytoplasm. It carries out the reaction ATP + H2O + cellular proteinSide 1 = ADP + phosphate + cellular proteinSide 2.. Part of the Sec protein translocase complex. Interacts with the SecYEG preprotein conducting channel. Has a central role in coupling the hydrolysis of ATP to the transfer of proteins into and across the cell membrane, serving both as a receptor for the preprotein-SecB complex and as an ATP-driven molecular motor driving the stepwise translocation of polypeptide chains across the membrane. The chain is Protein translocase subunit SecA from Burkholderia vietnamiensis (strain G4 / LMG 22486) (Burkholderia cepacia (strain R1808)).